The following is a 583-amino-acid chain: Propane 2-monooxygenase operon transcriptional activator MimR (583 aa).

A Sigma-54 factor interaction domain is found at 320–513 (LAGRSSSFRR…LRHVLTETLR (194 aa)). ATP-binding positions include 348 to 355 (GEKGSGRT) and 395 to 404 (DADFAVIVAD).

Acts as a transcriptional activator of the mimABCD operon encoding the propane 2-monooxygenase complex. The chain is Propane 2-monooxygenase operon transcriptional activator MimR from Mycolicibacterium goodii (Mycobacterium goodii).